The chain runs to 279 residues: Malonyl-[acyl-carrier protein] O-methyltransferase (279 aa).

The protein belongs to the methyltransferase superfamily.

It catalyses the reaction malonyl-[ACP] + S-adenosyl-L-methionine = malonyl-[ACP] methyl ester + S-adenosyl-L-homocysteine. It functions in the pathway cofactor biosynthesis; biotin biosynthesis. Functionally, converts the free carboxyl group of a malonyl-thioester to its methyl ester by transfer of a methyl group from S-adenosyl-L-methionine (SAM). It allows to synthesize pimeloyl-ACP via the fatty acid synthetic pathway. The sequence is that of Malonyl-[acyl-carrier protein] O-methyltransferase from Hahella chejuensis (strain KCTC 2396).